Reading from the N-terminus, the 508-residue chain is Photosystem II CP47 reaction center protein (508 aa).

A run of 6 helical transmembrane segments spans residues Ser-21 to Ser-36, Ile-101 to Trp-115, Gly-140 to Phe-156, Ile-203 to Ser-218, Val-237 to Val-252, and Ser-457 to Arg-472.

This sequence belongs to the PsbB/PsbC family. PsbB subfamily. As to quaternary structure, PSII is composed of 1 copy each of membrane proteins PsbA, PsbB, PsbC, PsbD, PsbE, PsbF, PsbH, PsbI, PsbJ, PsbK, PsbL, PsbM, PsbT, PsbX, PsbY, PsbZ, Psb30/Ycf12, at least 3 peripheral proteins of the oxygen-evolving complex and a large number of cofactors. It forms dimeric complexes. It depends on Binds multiple chlorophylls. PSII binds additional chlorophylls, carotenoids and specific lipids. as a cofactor.

It is found in the plastid. It localises to the chloroplast thylakoid membrane. One of the components of the core complex of photosystem II (PSII). It binds chlorophyll and helps catalyze the primary light-induced photochemical processes of PSII. PSII is a light-driven water:plastoquinone oxidoreductase, using light energy to abstract electrons from H(2)O, generating O(2) and a proton gradient subsequently used for ATP formation. The polypeptide is Photosystem II CP47 reaction center protein (Jasminum nudiflorum (Winter jasmine)).